A 295-amino-acid chain; its full sequence is Mycothiol acetyltransferase (295 aa).

1D-myo-inositol 2-(L-cysteinylamino)-2-deoxy-alpha-D-glucopyranoside is bound at residue glutamate 30. 62 to 64 serves as a coordination point for acetyl-CoA; it reads LVV. Residues 137–295 form the N-acetyltransferase domain; the sequence is VTVRAFRADS…DDDTHVQYRR (159 aa). Glutamate 165, lysine 209, and glutamate 227 together coordinate 1D-myo-inositol 2-(L-cysteinylamino)-2-deoxy-alpha-D-glucopyranoside. Residues 231–233 and 238–244 contribute to the acetyl-CoA site; these read VGI and QGRGLGK. Tyrosine 265 serves as a coordination point for 1D-myo-inositol 2-(L-cysteinylamino)-2-deoxy-alpha-D-glucopyranoside.

Belongs to the acetyltransferase family. MshD subfamily. In terms of assembly, monomer.

It carries out the reaction 1D-myo-inositol 2-(L-cysteinylamino)-2-deoxy-alpha-D-glucopyranoside + acetyl-CoA = mycothiol + CoA + H(+). Functionally, catalyzes the transfer of acetyl from acetyl-CoA to desacetylmycothiol (Cys-GlcN-Ins) to form mycothiol. In Nocardioides sp. (strain ATCC BAA-499 / JS614), this protein is Mycothiol acetyltransferase.